The following is a 160-amino-acid chain: MRSKGYRRGTRYLFSQDHRKHGVAHVSKYLEKYEIGDMVDILVNPAMMKGMPHKYYHGRTGRVYDVKPRSLNVALYKRVRGKYVIKKIIVRIEHVRKSRCSEESQKRILMAAEMARDAESRGVVLAPSKRKIEGPRKAVEVSLDNNQPIEVGYEPHVVIF.

It belongs to the eukaryotic ribosomal protein eL21 family.

This Encephalitozoon cuniculi (strain GB-M1) (Microsporidian parasite) protein is Large ribosomal subunit protein eL21 (RPL21).